The primary structure comprises 372 residues: ATP-sensitive inward rectifier potassium channel 1 (372 aa).

Topologically, residues 1-58 are cytoplasmic; sequence MFKHLRRWFVTHIFGRSRQRARLVSKDGRCNIEFGNVDAQSRFIFFVDIWTTVLDLKW. The residue at position 25 (Ser-25) is a Phosphoserine; by SGK1. The helical transmembrane segment at 59-83 threads the bilayer; it reads RYKMTVFITAFLGSWFLFGLLWYVV. The Extracellular portion of the chain corresponds to 84-108; that stretch reads AYVHKDLPEFYPPDNRTPCVENING. An N-linked (GlcNAc...) asparagine glycan is attached at Asn-98. The segment at residues 109–120 is an intramembrane region (helical; Pore-forming); it reads MTSAFLFSLETQ. Positions 121 to 127 form an intramembrane region, pore-forming; it reads VTIGYGF. The short motif at 122–127 is the Selectivity filter element; that stretch reads TIGYGF. Over 128–136 the chain is Extracellular; it reads RFVTEQCAT. The helical transmembrane segment at 137 to 158 threads the bilayer; sequence AIFLLIFQSILGVIINSFMCGA. Residues 159-372 are Cytoplasmic-facing; it reads ILAKISRPKK…EVDETDDTQM (214 aa). A polyphosphoinositide (PIP2)-binding region spans residues 161-188; sequence AKISRPKKRAKTITFSKNAVISKRGGKL. 204-211 is an ATP binding site; it reads GSHIYGKL.

This sequence belongs to the inward rectifier-type potassium channel (TC 1.A.2.1) family. KCNJ1 subfamily. As to quaternary structure, interacts with SGK1 and SLC9A3R2/NHERF2. Post-translationally, phosphorylation at Ser-25 by SGK1 is necessary for its expression at the cell membrane.

It is found in the cell membrane. It carries out the reaction K(+)(in) = K(+)(out). Its activity is regulated as follows. Inhibited by WNK3. Activated by phosphatidylinositol 4,5 biphosphate (PtdIns(4,5)P2). Functionally, inward rectifier potassium channels are characterized by a greater tendency to allow potassium to flow into the cell rather than out of it. Their voltage dependence is regulated by the concentration of extracellular potassium; as external potassium is raised, the voltage range of the channel opening shifts to more positive voltages. The inward rectification is mainly due to the blockage of outward current by internal magnesium. This channel is activated by internal ATP and can be blocked by external barium. In the kidney, probably plays a major role in potassium homeostasis. This chain is ATP-sensitive inward rectifier potassium channel 1 (Kcnj1), found in Mus musculus (Mouse).